A 475-amino-acid polypeptide reads, in one-letter code: tRNA-2-methylthio-N(6)-dimethylallyladenosine synthase (475 aa).

Over residues 1-10 (MHETTLKREG) the composition is skewed to basic and acidic residues. A disordered region spans residues 1–25 (MHETTLKREGASTPSNPTPSTHAAG). Residues 12-23 (STPSNPTPSTHA) are compositionally biased toward polar residues. Residues 27–144 (GKIYIRTFGC…LPELIRRRRD (118 aa)) form the MTTase N-terminal domain. [4Fe-4S] cluster is bound by residues C36, C73, C107, C181, C185, and C188. The Radical SAM core domain maps to 167–400 (RVEGATAFVS…QALINEQAAA (234 aa)). One can recognise a TRAM domain in the interval 403 to 466 (QSMVGTRQRL…TNSLRGRVAG (64 aa)).

Belongs to the methylthiotransferase family. MiaB subfamily. As to quaternary structure, monomer. [4Fe-4S] cluster is required as a cofactor.

The protein localises to the cytoplasm. It catalyses the reaction N(6)-dimethylallyladenosine(37) in tRNA + (sulfur carrier)-SH + AH2 + 2 S-adenosyl-L-methionine = 2-methylsulfanyl-N(6)-dimethylallyladenosine(37) in tRNA + (sulfur carrier)-H + 5'-deoxyadenosine + L-methionine + A + S-adenosyl-L-homocysteine + 2 H(+). In terms of biological role, catalyzes the methylthiolation of N6-(dimethylallyl)adenosine (i(6)A), leading to the formation of 2-methylthio-N6-(dimethylallyl)adenosine (ms(2)i(6)A) at position 37 in tRNAs that read codons beginning with uridine. This is tRNA-2-methylthio-N(6)-dimethylallyladenosine synthase from Bordetella avium (strain 197N).